A 171-amino-acid chain; its full sequence is tRNA-specific adenosine deaminase (171 aa).

Residues 6–133 (EEQTYFMQEA…ERLNHRVQVE (128 aa)) enclose the CMP/dCMP-type deaminase domain. Residue His57 participates in Zn(2+) binding. Catalysis depends on Glu59, which acts as the Proton donor. 2 residues coordinate Zn(2+): Cys87 and Cys90.

Belongs to the cytidine and deoxycytidylate deaminase family. Homodimer. Requires Zn(2+) as cofactor.

The enzyme catalyses adenosine(34) in tRNA + H2O + H(+) = inosine(34) in tRNA + NH4(+). In terms of biological role, catalyzes the deamination of adenosine to inosine at the wobble position 34 of tRNA(Arg2). This is tRNA-specific adenosine deaminase from Streptococcus pyogenes serotype M3 (strain ATCC BAA-595 / MGAS315).